The primary structure comprises 342 residues: tRNA dimethylallyltransferase (342 aa).

ATP is bound at residue 39-46; the sequence is GPTGSGKT. 41–46 provides a ligand contact to substrate; the sequence is TGSGKT. The segment at 64 to 67 is interaction with substrate tRNA; sequence DSMQ.

The protein belongs to the IPP transferase family. In terms of assembly, monomer. Mg(2+) is required as a cofactor.

The enzyme catalyses adenosine(37) in tRNA + dimethylallyl diphosphate = N(6)-dimethylallyladenosine(37) in tRNA + diphosphate. Functionally, catalyzes the transfer of a dimethylallyl group onto the adenine at position 37 in tRNAs that read codons beginning with uridine, leading to the formation of N6-(dimethylallyl)adenosine (i(6)A). The polypeptide is tRNA dimethylallyltransferase (Chlamydia pneumoniae (Chlamydophila pneumoniae)).